The following is a 345-amino-acid chain: tRNA-specific 2-thiouridylase MnmA (345 aa).

Residues 6-13 (AMSGGVDS) and leucine 32 each bind ATP. Cysteine 100 (nucleophile) is an active-site residue. An intrachain disulfide couples cysteine 100 to cysteine 197. ATP is bound at residue glycine 124. The interval 146–148 (RDQ) is interaction with tRNA. The active-site Cysteine persulfide intermediate is the cysteine 197.

This sequence belongs to the MnmA/TRMU family.

It is found in the cytoplasm. The catalysed reaction is S-sulfanyl-L-cysteinyl-[protein] + uridine(34) in tRNA + AH2 + ATP = 2-thiouridine(34) in tRNA + L-cysteinyl-[protein] + A + AMP + diphosphate + H(+). Its function is as follows. Catalyzes the 2-thiolation of uridine at the wobble position (U34) of tRNA, leading to the formation of s(2)U34. This chain is tRNA-specific 2-thiouridylase MnmA, found in Acidiphilium cryptum (strain JF-5).